Reading from the N-terminus, the 471-residue chain is Heat shock 70 kDa protein 13 (471 aa).

A signal peptide spans 1 to 22; it reads MAGEMTILGSAVLTLLLAGYLA. Basic and acidic residues predominate over residues 317–330; the sequence is DSKEPQNGDSELPK. Residues 317–350 form a disordered region; it reads DSKEPQNGDSELPKDQLTPGDGHHVNRVFRPGLS.

This sequence belongs to the heat shock protein 70 family. In terms of assembly, binds UBQLN2.

The protein localises to the microsome. The protein resides in the endoplasmic reticulum. In terms of biological role, has peptide-independent ATPase activity. In Mus musculus (Mouse), this protein is Heat shock 70 kDa protein 13 (Hspa13).